The primary structure comprises 800 residues: Aldehyde dehydrogenase family 16 member A1 (800 aa).

Belongs to the aldehyde dehydrogenase family. Interacts with SPG21.

The chain is Aldehyde dehydrogenase family 16 member A1 (ALDH16A1) from Bos taurus (Bovine).